Consider the following 354-residue polypeptide: DNA replication and repair protein RecF (354 aa).

30-37 serves as a coordination point for ATP; sequence GDNGSGKT.

The protein belongs to the RecF family.

The protein localises to the cytoplasm. Its function is as follows. The RecF protein is involved in DNA metabolism; it is required for DNA replication and normal SOS inducibility. RecF binds preferentially to single-stranded, linear DNA. It also seems to bind ATP. The polypeptide is DNA replication and repair protein RecF (Idiomarina loihiensis (strain ATCC BAA-735 / DSM 15497 / L2-TR)).